The primary structure comprises 283 residues: Ribosomal RNA small subunit methyltransferase A (283 aa).

Asparagine 13, leucine 15, glycine 39, glutamate 59, aspartate 87, and asparagine 108 together coordinate S-adenosyl-L-methionine.

The protein belongs to the class I-like SAM-binding methyltransferase superfamily. rRNA adenine N(6)-methyltransferase family. RsmA subfamily.

It localises to the cytoplasm. The catalysed reaction is adenosine(1518)/adenosine(1519) in 16S rRNA + 4 S-adenosyl-L-methionine = N(6)-dimethyladenosine(1518)/N(6)-dimethyladenosine(1519) in 16S rRNA + 4 S-adenosyl-L-homocysteine + 4 H(+). Functionally, specifically dimethylates two adjacent adenosines (A1518 and A1519) in the loop of a conserved hairpin near the 3'-end of 16S rRNA in the 30S particle. May play a critical role in biogenesis of 30S subunits. The chain is Ribosomal RNA small subunit methyltransferase A from Helicobacter hepaticus (strain ATCC 51449 / 3B1).